We begin with the raw amino-acid sequence, 502 residues long: 4,4'-diapophytoene desaturase (4,4'-diaponeurosporene-forming) (502 aa).

FAD is bound at residue 5–17; that stretch reads VIGAGVTGLAAAA.

This sequence belongs to the carotenoid/retinoid oxidoreductase family. CrtN subfamily.

It carries out the reaction 15-cis-4,4'-diapophytoene + 3 FAD + 3 H(+) = all-trans-4,4'-diaponeurosporene + 3 FADH2. The protein operates within carotenoid biosynthesis; staphyloxanthin biosynthesis; staphyloxanthin from farnesyl diphosphate: step 2/5. Its function is as follows. Involved in the biosynthesis of the yellow-orange carotenoid staphyloxanthin, which plays a role in the virulence via its protective function against oxidative stress. Catalyzes three successive dehydrogenation reactions that lead to the introduction of three double bonds into 4,4'-diapophytoene (dehydrosqualene), with 4,4'-diapophytofluene and 4,4'-diapo-zeta-carotene as intermediates, and 4,4'-diaponeurosporene (the major deep-yellow pigment in staphylococci strains) as the end product. The sequence is that of 4,4'-diapophytoene desaturase (4,4'-diaponeurosporene-forming) from Staphylococcus aureus (strain bovine RF122 / ET3-1).